The primary structure comprises 289 residues: Esterase GA18864 (289 aa).

Residues 1-19 (MTNNDAAVEAPSSSRASSS) are compositionally biased toward low complexity. Residues 1–24 (MTNNDAAVEAPSSSRASSSKQQPK) form a disordered region. Active-site charge relay system residues include serine 133, aspartate 191, and histidine 218. A disordered region spans residues 253-289 (VSFIESGAEDNDDDGDANDAEVAAATAAAGSDLDDSD). Residues 259-271 (GAEDNDDDGDAND) show a composition bias toward acidic residues. Residues 272 to 283 (AEVAAATAAAGS) are compositionally biased toward low complexity.

The protein belongs to the LovG family.

The chain is Esterase GA18864 from Drosophila pseudoobscura pseudoobscura (Fruit fly).